The primary structure comprises 372 residues: C-X-C chemokine receptor type 5 (372 aa).

At 1-55 the chain is on the extracellular side; it reads MNYPLTLEMDLENLEDLFWELDRLDNYNDTSLVENHLCPATEGPLMASFKAVFVP. A glycan (N-linked (GlcNAc...) asparagine) is linked at Asn28. Residues 56-76 traverse the membrane as a helical segment; the sequence is VAYSLIFLLGVIGNVLVLVIL. Topologically, residues 77–88 are cytoplasmic; it reads ERHRQTRSSTET. A helical membrane pass occupies residues 89–109; it reads FLFHLAVADLLLVFILPFAVA. The Extracellular segment spans residues 110-124; that stretch reads EGSVGWVLGTFLCKT. Cys122 and Cys202 are joined by a disulfide. The helical transmembrane segment at 125–145 threads the bilayer; that stretch reads VIALHKVNFYCSSLLLACIAV. The Cytoplasmic segment spans residues 146–167; that stretch reads DRYLAIVHAVHAYRHRRLLSIH. Residues 168-188 form a helical membrane-spanning segment; the sequence is ITCGTIWLVGFLLALPEILFA. Residues 189–219 lie on the Extracellular side of the membrane; that stretch reads KVSQGHHNNSLPRCTFSQENQAETHAWFTSR. Asn196 carries N-linked (GlcNAc...) asparagine glycosylation. The chain crosses the membrane as a helical span at residues 220-240; that stretch reads FLYHVAGFLLPMLVMGWCYVG. Residues 241 to 259 are Cytoplasmic-facing; it reads VVHRLRQAQRRPQRQKAVR. A helical membrane pass occupies residues 260–280; that stretch reads VAILVTSIFFLCWSPYHIVIF. Residues 281-304 are Extracellular-facing; the sequence is LDTLARLKAVDNTCKLNGSLPVAI. Residues 305-325 form a helical membrane-spanning segment; it reads TMCEFLGLAHCCLNPMLYTFA. Over 326-372 the chain is Cytoplasmic; sequence GVKFRSDLSRLLTKLGCTGPASLCQLFPSWRRSSLSESENATSLTTF.

This sequence belongs to the G-protein coupled receptor 1 family. Expression in mature B-cells and Burkitt lymphoma cells.

It localises to the cell membrane. Cytokine receptor that binds to B-lymphocyte chemoattractant (BLC). Involved in B-cell migration into B-cell follicles of spleen and Peyer patches but not into those of mesenteric or peripheral lymph nodes. May have a regulatory function in Burkitt lymphoma (BL) lymphomagenesis and/or B-cell differentiation. The protein is C-X-C chemokine receptor type 5 (CXCR5) of Homo sapiens (Human).